The chain runs to 318 residues: Methionyl-tRNA formyltransferase (318 aa).

(6S)-5,6,7,8-tetrahydrofolate is bound at residue 112-115; the sequence is SILP.

It belongs to the Fmt family.

The catalysed reaction is L-methionyl-tRNA(fMet) + (6R)-10-formyltetrahydrofolate = N-formyl-L-methionyl-tRNA(fMet) + (6S)-5,6,7,8-tetrahydrofolate + H(+). Attaches a formyl group to the free amino group of methionyl-tRNA(fMet). The formyl group appears to play a dual role in the initiator identity of N-formylmethionyl-tRNA by promoting its recognition by IF2 and preventing the misappropriation of this tRNA by the elongation apparatus. The sequence is that of Methionyl-tRNA formyltransferase from Haemophilus influenzae (strain PittGG).